A 100-amino-acid chain; its full sequence is MAPTAYYVALSGLLFAIGMIGVLTRRTAIMIFLSVELMLNAANLALVAFARAWGDLTAQTAVFIVMTLAAAEVAIGLAIIVAIFRKRETTNVDDLATLKG.

3 helical membrane passes run 3-23, 29-49, and 63-83; these read PTAY…IGVL, IMIF…LVAF, and FIVM…IVAI.

It belongs to the complex I subunit 4L family. As to quaternary structure, NDH-1 is composed of 15 different subunits. Subunits NuoA, H, J, K, L, M, N constitute the membrane sector of the complex.

It is found in the cell membrane. The enzyme catalyses a quinone + NADH + 5 H(+)(in) = a quinol + NAD(+) + 4 H(+)(out). Its function is as follows. NDH-1 shuttles electrons from NADH, via FMN and iron-sulfur (Fe-S) centers, to quinones in the respiratory chain. The immediate electron acceptor for the enzyme in this species is believed to be a menaquinone. Couples the redox reaction to proton translocation (for every two electrons transferred, four hydrogen ions are translocated across the cytoplasmic membrane), and thus conserves the redox energy in a proton gradient. This chain is NADH-quinone oxidoreductase subunit K, found in Deinococcus geothermalis (strain DSM 11300 / CIP 105573 / AG-3a).